A 500-amino-acid polypeptide reads, in one-letter code: MDLQLQIPSYPIIFSFFIFIFMLIKIWKKQTQTSIFPPGPFKFPIVGNIPQLATGGTLPHHRLRDLAKIYGPIMTIQLGQVKSVVISSPETAKEVLKTQDIQFADRPLLLAGEMVLYNRKDILYGTYGDQWRQMRKICTLELLSAKRIQSFKSVREKEVESFIKTLRSKSGIPVNLTNAVFELTNTIMMITTIGQKCKNQEAVMSVIDRVSEAAAGFSVADVFPSLKFLHYLSGEKTKLQKLHKETDQILEEIISEHKANAKVGAQADNLLDVLLDLQKNGNLQVPLTNDNIKAATLEMFGAGSDTSSKTTDWAMAQMMRKPTTMKKAQEEVRRVFGENGKVEESRIQELKYLKLVVKETLRLHPAVALIPRECREKTKIDGFDIYPKTKILVNPWAIGRDPKVWNEPESFNPERFQDSPIDYKGTNFELIPFGAGKRICPGMTLGITNLELFLANLLYHFDWKFPDGITSENLDMTEAIGGAIKRKLDLELISIPYTSS.

A helical; Signal-anchor for type II membrane protein membrane pass occupies residues Ile-7–Trp-27. Heme is bound at residue Cys-440.

This sequence belongs to the cytochrome P450 family. Requires heme as cofactor. Expressed in mature seeds.

The protein resides in the membrane. It carries out the reaction (-)-casbene + reduced [NADPH--hemoprotein reductase] + O2 = 4-hydroxycasbene + oxidized [NADPH--hemoprotein reductase] + H2O + H(+). The enzyme catalyses 8-hydroxycasbene + reduced [NADPH--hemoprotein reductase] + O2 = 4,8-dihydroxycasbene + oxidized [NADPH--hemoprotein reductase] + H2O + H(+). It catalyses the reaction 4,8-dihydroxycasbene + reduced [NADPH--hemoprotein reductase] + O2 = 4,5,8-trihydroxycasbene + oxidized [NADPH--hemoprotein reductase] + H2O + H(+). Its pathway is secondary metabolite biosynthesis; terpenoid biosynthesis. Functionally, involved in the biosynthesis of macrocyclic lathyrane type diterpenoids (also called Euphorbia factors) natural products, including the cyclization route from casbene to jolkinol C, a precursor for ingenol mebutate that is used to treat actinic keratosis, a precancerous skin condition. Catalyzes the hydroxylation of (-)-casbene and 8-hydroxycasbene to produce 4-hydroxycasbene and 4,8-dihydroxycasbene, respectively. This is Cytochrome P450 726A27 from Euphorbia lathyris (Caper spurge).